We begin with the raw amino-acid sequence, 334 residues long: Uracil-DNA glycosylase (334 aa).

Residues 1-17 are compositionally biased toward basic residues; that stretch reads MKRACSRSPSPRRRPSS. Disordered stretches follow at residues 1 to 63 and 79 to 104; these read MKRA…CRSS and VTFS…AATS. Positions 40–50 are enriched in polar residues; that stretch reads GASNDASTETR. The active-site Proton acceptor is Asp-178.

Belongs to the uracil-DNA glycosylase (UDG) superfamily. UNG family.

It localises to the host nucleus. It catalyses the reaction Hydrolyzes single-stranded DNA or mismatched double-stranded DNA and polynucleotides, releasing free uracil.. Its function is as follows. Excises uracil residues from the DNA which can arise as a result of misincorporation of dUMP residues by DNA polymerase or deamination of cytosines. Therefore may reduce deleterious uracil incorporation into the viral genome, particularly in terminally differentiated cells which lack DNA repair enzymes. In Human herpesvirus 1 (strain 17) (HHV-1), this protein is Uracil-DNA glycosylase.